The primary structure comprises 492 residues: Catalase isozyme 1 (492 aa).

Catalysis depends on residues histidine 65 and asparagine 138. Tyrosine 348 serves as a coordination point for heme.

This sequence belongs to the catalase family. In terms of assembly, homotetramer. Requires heme as cofactor.

It is found in the peroxisome. It carries out the reaction 2 H2O2 = O2 + 2 H2O. In terms of biological role, occurs in almost all aerobically respiring organisms and serves to protect cells from the toxic effects of hydrogen peroxide. In Gossypium hirsutum (Upland cotton), this protein is Catalase isozyme 1 (CAT1).